A 220-amino-acid chain; its full sequence is Thioredoxin domain-containing protein (220 aa).

A signal peptide spans 1–19 (MKFLILNCLILFSLISSEA). Positions 20–141 (TNVKLDREDQ…SEFALGDFKN (122 aa)) constitute a Thioredoxin domain. Over 20–181 (TNVKLDREDQ…YDAALAGFVT (162 aa)) the chain is Lumenal. A disulfide bridge connects residues Cys64 and Cys67. Residues 182 to 202 (ISSFSFLFGLLVGLMLSLFLF) traverse the membrane as a helical segment. At 203–220 (TRRATRKPKVLTERKKDK) the chain is on the cytoplasmic side. A Di-lysine motif motif is present at residues 217–220 (KKDK).

The protein belongs to the protein disulfide isomerase family.

It is found in the endoplasmic reticulum membrane. In Theileria parva (East coast fever infection agent), this protein is Thioredoxin domain-containing protein.